Consider the following 322-residue polypeptide: Allergen Asp f 4 (322 aa).

Residues 1–20 form the signal peptide; sequence MQLKNSMLLLTALAAGSSVA. Positions 80–105 are enriched in low complexity; that stretch reads AAAAAASTPEPSSSHSDSSSSSGVSA. The segment at 80-109 is disordered; that stretch reads AAAAAASTPEPSSSHSDSSSSSGVSADWTN.

The protein localises to the secreted. The polypeptide is Allergen Asp f 4 (Aspergillus fumigatus (strain ATCC MYA-4609 / CBS 101355 / FGSC A1100 / Af293) (Neosartorya fumigata)).